The sequence spans 208 residues: Uracil phosphoribosyltransferase (208 aa).

Residues Arg-78, Arg-103, and 130-138 contribute to the 5-phospho-alpha-D-ribose 1-diphosphate site; that span reads DPMLATGGT. Residues Ile-193 and 198-200 contribute to the uracil site; that span reads GDA. Asp-199 provides a ligand contact to 5-phospho-alpha-D-ribose 1-diphosphate.

The protein belongs to the UPRTase family. Mg(2+) serves as cofactor.

The enzyme catalyses UMP + diphosphate = 5-phospho-alpha-D-ribose 1-diphosphate + uracil. It functions in the pathway pyrimidine metabolism; UMP biosynthesis via salvage pathway; UMP from uracil: step 1/1. With respect to regulation, allosterically activated by GTP. Its function is as follows. Catalyzes the conversion of uracil and 5-phospho-alpha-D-ribose 1-diphosphate (PRPP) to UMP and diphosphate. The polypeptide is Uracil phosphoribosyltransferase (Desulforapulum autotrophicum (strain ATCC 43914 / DSM 3382 / VKM B-1955 / HRM2) (Desulfobacterium autotrophicum)).